The sequence spans 130 residues: Small ribosomal subunit protein uS9 (130 aa).

Belongs to the universal ribosomal protein uS9 family.

The chain is Small ribosomal subunit protein uS9 from Hydrogenovibrio crunogenus (strain DSM 25203 / XCL-2) (Thiomicrospira crunogena).